The chain runs to 373 residues: Alpha-ketoglutarate dependent kainoid synthase (373 aa).

Positions 204–320 (TINSKKMFFT…RSSLITFYEP (117 aa)) constitute a Fe2OG dioxygenase domain. Fe cation contacts are provided by His235, Asp237, and His296. Arg311 is a binding site for 2-oxoglutarate.

The protein belongs to the iron/ascorbate-dependent oxidoreductase family. Fe(2+) serves as cofactor.

It carries out the reaction N-(7'-carboxy-7'-demethylgeranyl)-L-glutamate + 2-oxoglutarate + O2 = isodomoate A + succinate + CO2 + H2O. It catalyses the reaction N-geranyl-L-glutamate + 2-oxoglutarate + O2 = dainate A + succinate + CO2 + H2O. It functions in the pathway secondary metabolite biosynthesis. Functionally, iron/ascorbate-dependent oxidoreductase: part of the gene cluster that mediates the biosynthesis of domoic acid (DA) and derivatives, natural products with neurochemical activity acting as ionotropic glutamate receptor (iGluR) agonists, thus being neurotoxins causing amnesic shellfish poisoning (ASP). Catalyzes the conversion of 7'-N-carboxy-L-geranyl-L-glutamic acid (cNGG) to isodomoic acid-A. Also mediates the conversion of N-geranyl-L-glutamic acid (L-NGG) to dainic acid A. In Pseudo-nitzschia multiseries (Marine planktonic diatom), this protein is Alpha-ketoglutarate dependent kainoid synthase.